The following is a 228-amino-acid chain: Ferric nitrobindin-like protein (228 aa).

Residues methionine 1–lysine 21 form a disordered region. Residues glycine 75 to glycine 81 carry the GXWXGXG motif.

This sequence belongs to the nitrobindin family.

The polypeptide is Ferric nitrobindin-like protein (Mycobacterium leprae (strain TN)).